The sequence spans 1518 residues: Probable serine/threonine-protein kinase HSL1 (1518 aa).

Disordered regions lie at residues 1–43 (MTGH…GHLE) and 55–83 (RLSQ…PWKL). Residues 55-68 (RLSQPDSTVSVATK) show a composition bias toward polar residues. The 289-residue stretch at 81–369 (WKLGKTLGKG…TQEILKHPLI (289 aa)) folds into the Protein kinase domain. Residues 87-95 (LGKGSSGRV) and K110 contribute to the ATP site. D239 functions as the Proton acceptor in the catalytic mechanism. The interval 467 to 502 (LSSSSENKKSATESSVNEPRIEYASKTANNTGLRSE) is disordered. Over residues 492 to 501 (KTANNTGLRS) the composition is skewed to polar residues. Residue S511 is modified to Phosphoserine. A compositionally biased stretch (low complexity) spans 599 to 611 (SNSRLSLSASTSR). The interval 599–651 (SNSRLSLSASTSRETVHDNEMPLPQLPKSPSRYSLSRRAIHASPSTKSIHKSL) is disordered. Phosphoserine occurs at positions 629 and 685. Residues 741-783 (EEEDNEKERDTQRQRQNDTKSSADTFTISGVSTNKENEGPEYP) form a disordered region. Basic and acidic residues predominate over residues 746–758 (EKERDTQRQRQND). Over residues 759–774 (TKSSADTFTISGVSTN) the composition is skewed to polar residues. S837 and S866 each carry phosphoserine. A compositionally biased stretch (basic and acidic residues) spans 856–876 (EQLQKKNDRPSPLKPIQHQEL). Disordered stretches follow at residues 856-898 (EQLQ…RRNI), 1005-1030 (DDKH…KQSA), 1150-1170 (APSD…RASV), and 1220-1243 (SPEN…RDSN). Position 1220 is a phosphoserine (S1220). The span at 1222–1243 (ENPSNTHMQKRFSSTRGSRDSN) shows a compositional bias: polar residues. A Phosphoserine modification is found at S1250. The disordered stretch occupies residues 1259 to 1291 (EEDQDGHTSQADILESSMSYSKRRPSEESVNPK). A compositionally biased stretch (polar residues) spans 1265–1278 (HTSQADILESSMSY). Phosphoserine occurs at positions 1284, 1287, and 1325.

Belongs to the protein kinase superfamily. CAMK Ser/Thr protein kinase family. NIM1 subfamily.

Its subcellular location is the bud neck. It catalyses the reaction L-seryl-[protein] + ATP = O-phospho-L-seryl-[protein] + ADP + H(+). It carries out the reaction L-threonyl-[protein] + ATP = O-phospho-L-threonyl-[protein] + ADP + H(+). In Saccharomyces cerevisiae (strain ATCC 204508 / S288c) (Baker's yeast), this protein is Probable serine/threonine-protein kinase HSL1 (HSL1).